A 441-amino-acid polypeptide reads, in one-letter code: Gamma-glutamyl phosphate reductase (441 aa).

It belongs to the gamma-glutamyl phosphate reductase family.

The protein localises to the cytoplasm. It catalyses the reaction L-glutamate 5-semialdehyde + phosphate + NADP(+) = L-glutamyl 5-phosphate + NADPH + H(+). The protein operates within amino-acid biosynthesis; L-proline biosynthesis; L-glutamate 5-semialdehyde from L-glutamate: step 2/2. Functionally, catalyzes the NADPH-dependent reduction of L-glutamate 5-phosphate into L-glutamate 5-semialdehyde and phosphate. The product spontaneously undergoes cyclization to form 1-pyrroline-5-carboxylate. The protein is Gamma-glutamyl phosphate reductase of Hydrogenobaculum sp. (strain Y04AAS1).